A 331-amino-acid polypeptide reads, in one-letter code: Methionyl-tRNA formyltransferase (331 aa).

111–114 lines the (6S)-5,6,7,8-tetrahydrofolate pocket; the sequence is SLLP.

The protein belongs to the Fmt family.

It catalyses the reaction L-methionyl-tRNA(fMet) + (6R)-10-formyltetrahydrofolate = N-formyl-L-methionyl-tRNA(fMet) + (6S)-5,6,7,8-tetrahydrofolate + H(+). In terms of biological role, attaches a formyl group to the free amino group of methionyl-tRNA(fMet). The formyl group appears to play a dual role in the initiator identity of N-formylmethionyl-tRNA by promoting its recognition by IF2 and preventing the misappropriation of this tRNA by the elongation apparatus. The polypeptide is Methionyl-tRNA formyltransferase (Thermosynechococcus vestitus (strain NIES-2133 / IAM M-273 / BP-1)).